Consider the following 273-residue polypeptide: Hemin import ATP-binding protein HmuV (273 aa).

Residues 2–256 (LTAHHLDVAR…AHIAQCYGFA (255 aa)) form the ABC transporter domain. 34–41 (GRNGAGKS) contributes to the ATP binding site.

It belongs to the ABC transporter superfamily. Heme (hemin) importer (TC 3.A.1.14.5) family. In terms of assembly, the complex is composed of two ATP-binding proteins (HmuV), two transmembrane proteins (HmuU) and a solute-binding protein (HmuT).

The protein resides in the cell inner membrane. Its function is as follows. Part of the ABC transporter complex HmuTUV involved in hemin import. Responsible for energy coupling to the transport system. This Burkholderia lata (strain ATCC 17760 / DSM 23089 / LMG 22485 / NCIMB 9086 / R18194 / 383) protein is Hemin import ATP-binding protein HmuV.